The primary structure comprises 433 residues: Putative ankyrin repeat protein R578 (433 aa).

ANK repeat units follow at residues 166 to 195, 197 to 224, 356 to 386, and 388 to 415; these read NKEI…ILSE, DHLI…LSKL, VNPN…DIHS, and PSLI…ICDE.

The sequence is that of Putative ankyrin repeat protein R578 from Acanthamoeba polyphaga mimivirus (APMV).